We begin with the raw amino-acid sequence, 503 residues long: Maturase K (503 aa).

Belongs to the intron maturase 2 family. MatK subfamily.

It is found in the plastid. Its subcellular location is the chloroplast. Usually encoded in the trnK tRNA gene intron. Probably assists in splicing its own and other chloroplast group II introns. This Caragana arborescens (Siberian pea tree) protein is Maturase K.